Consider the following 72-residue polypeptide: Prokaryotic ubiquitin-like protein Pup (72 aa).

Positions 1 to 10 are enriched in gly residues; that stretch reads MATKDTGGGQ. Residues 1 to 45 form a disordered region; it reads MATKDTGGGQQKATRSTEEVEEQAQDAQASEDLAERQEKLSDDVD. Residues 10–60 are a coiled coil; sequence QQKATRSTEEVEEQAQDAQASEDLAERQEKLSDDVDSVLDEIDDVLEENAE. The interval 28 to 66 is ARC ATPase binding; the sequence is QASEDLAERQEKLSDDVDSVLDEIDDVLEENAEDFVRSF. The span at 33–42 shows a compositional bias: basic and acidic residues; sequence LAERQEKLSD. Glutamine 72 carries the post-translational modification Deamidated glutamine. Glutamine 72 is covalently cross-linked (Isoglutamyl lysine isopeptide (Gln-Lys) (interchain with K-? in acceptor proteins)).

It belongs to the prokaryotic ubiquitin-like protein family. In terms of assembly, strongly interacts with the proteasome-associated ATPase ARC through a hydrophobic interface; the interacting region of Pup lies in its C-terminal half. There is one Pup binding site per ARC hexamer ring. Post-translationally, is modified by deamidation of its C-terminal glutamine to glutamate by the deamidase Dop, a prerequisite to the subsequent pupylation process.

It participates in protein degradation; proteasomal Pup-dependent pathway. Protein modifier that is covalently attached to lysine residues of substrate proteins, thereby targeting them for proteasomal degradation. The tagging system is termed pupylation. In Streptomyces griseus subsp. griseus (strain JCM 4626 / CBS 651.72 / NBRC 13350 / KCC S-0626 / ISP 5235), this protein is Prokaryotic ubiquitin-like protein Pup.